Consider the following 263-residue polypeptide: Retinoic acid early transcript 1E (263 aa).

The first 30 residues, 1–30 (MRRISLTSSPVRLLLFLLLLLIALEIMVGG), serve as a signal peptide directing secretion. Residues 31 to 116 (HSLCFNFTIK…DIKPQIKTSD (86 aa)) are MHC class I alpha-1 like; down-regulates the cell surface expression of KLRK1. The Extracellular segment spans residues 31-225 (HSLCFNFTIK…IHWSSSSLPD (195 aa)). Residues Asn36, Asn154, and Asn212 are each glycosylated (N-linked (GlcNAc...) asparagine). Residues 117–207 (PSTLQVEMFC…GHWEAMPEPT (91 aa)) are MHC class I alpha-2 like; down-regulates the cell surface expression of KLRK1. The cysteines at positions 126 and 189 are disulfide-linked. Residues 226 to 248 (RWIILGAFILLVLMGIVLICVWW) form a helical membrane-spanning segment. The Cytoplasmic portion of the chain corresponds to 249–263 (QNGEWQAGLWPLRTS).

Belongs to the MHC class I family. As to quaternary structure, binds to KLRK1/NKG2D. (Microbial infection) Contrary to other family members, does not interact with CMV glycoprotein UL16. As to expression, predominantly expressed in the skin, but also expressed in testis and trachea. Up-regulated in tumor cells of different origins. Expression progressively decreased after treatment of tumor cells with retinoic acid.

It localises to the membrane. It is found in the secreted. Its function is as follows. Binds and activates the KLRK1/NKG2D receptor, mediating natural killer cell cytotoxicity. This Homo sapiens (Human) protein is Retinoic acid early transcript 1E.